Here is a 299-residue protein sequence, read N- to C-terminus: MMENSTTEARNEATMHLDEMTVEEALITMNKEDQQVPLAVRKAIPQLTKVIKKTIAQYKKGGRLIYIGAGTSGRLGVLDAAECVPTFNTDPHEIIGIIAGGQHAMTMAVEGAEDHKKLAEEDLKNIDLTSKDVVIGIAASGKTPYVIGGLTFANTIGATTVSISCNEHAVISEIAQYPVEVKVGPEVLTGSTRLKSGTAQKLILNMISTITMVGVGKVYDNLMIDVKATNQKLIDRSVRIIQEICAITYDEAMALYQVSEHDVKVATVMGMCGISKEEATRRLLNNGDIVKRAIRDRQP.

One can recognise an SIS domain in the interval 54–217 (TIAQYKKGGR…STITMVGVGK (164 aa)). Residue E82 is the Proton donor of the active site. The active site involves E113.

This sequence belongs to the GCKR-like family. MurNAc-6-P etherase subfamily. Homodimer.

It catalyses the reaction N-acetyl-D-muramate 6-phosphate + H2O = N-acetyl-D-glucosamine 6-phosphate + (R)-lactate. Its pathway is amino-sugar metabolism; N-acetylmuramate degradation. In terms of biological role, specifically catalyzes the cleavage of the D-lactyl ether substituent of MurNAc 6-phosphate, producing GlcNAc 6-phosphate and D-lactate. The chain is N-acetylmuramic acid 6-phosphate etherase from Staphylococcus aureus (strain USA300).